A 430-amino-acid chain; its full sequence is Ribosomal protein uS12 methylthiotransferase RimO (430 aa).

The region spanning 1–116 (MRVGIKVLGC…IANAIENGTD (116 aa)) is the MTTase N-terminal domain. Residues Cys-10, Cys-46, Cys-79, Cys-148, Cys-152, and Cys-155 each coordinate [4Fe-4S] cluster. One can recognise a Radical SAM core domain in the interval 134–365 (LEERPYAYVK…LLQAEISNSR (232 aa)). The TRAM domain occupies 367-430 (DRFVGKKLKF…DEYDMWGSVI (64 aa)).

This sequence belongs to the methylthiotransferase family. RimO subfamily. In terms of assembly, monomer. [4Fe-4S] cluster is required as a cofactor.

It localises to the cytoplasm. The catalysed reaction is L-aspartate(89)-[ribosomal protein uS12]-hydrogen + (sulfur carrier)-SH + AH2 + 2 S-adenosyl-L-methionine = 3-methylsulfanyl-L-aspartate(89)-[ribosomal protein uS12]-hydrogen + (sulfur carrier)-H + 5'-deoxyadenosine + L-methionine + A + S-adenosyl-L-homocysteine + 2 H(+). In terms of biological role, catalyzes the methylthiolation of an aspartic acid residue of ribosomal protein uS12. This Thermotoga maritima (strain ATCC 43589 / DSM 3109 / JCM 10099 / NBRC 100826 / MSB8) protein is Ribosomal protein uS12 methylthiotransferase RimO.